Here is a 423-residue protein sequence, read N- to C-terminus: GPI mannosyltransferase 2 (423 aa).

The next 9 membrane-spanning stretches (helical) occupy residues 11–31 (ILSL…IALG), 106–126 (WEAL…VLAL), 139–159 (LAYL…ISAP), 160–180 (YAES…AISL), 197–219 (GLSY…LFAV), 240–260 (LVAP…PQVL), 299–319 (YWTP…TILL), 351–371 (LAAI…VQII), and 400–420 (GVIV…ASFL).

It belongs to the PIGV family.

Its subcellular location is the endoplasmic reticulum membrane. It participates in glycolipid biosynthesis; glycosylphosphatidylinositol-anchor biosynthesis. In terms of biological role, mannosyltransferase involved in glycosylphosphatidylinositol-anchor biosynthesis. Transfers the second mannose to the glycosylphosphatidylinositol during GPI precursor assembly. This Gibberella zeae (strain ATCC MYA-4620 / CBS 123657 / FGSC 9075 / NRRL 31084 / PH-1) (Wheat head blight fungus) protein is GPI mannosyltransferase 2 (GPI18).